The following is a 723-amino-acid chain: Tripartite motif-containing protein 42 (723 aa).

Residues 146–192 (CPMCSRLRLHSFMLPCNHSLCEKCLRQLQKHAEVTENFFILICPVCD) form an RING-type zinc finger. 2 consecutive B box-type zinc fingers follow at residues 235–280 (PILC…FVDT) and 285–326 (QDEK…TISL). Zn(2+)-binding residues include Cys-290, His-293, Cys-313, and His-318. A coiled-coil region spans residues 382–407 (KLRSILQEKEKIIMEQIENLEVSRQK). Positions 434-492 (LKETGQVAFLQSAKILVDQIEDGIQTTYRPDPQLRLHSINYVPLDFVELSSAIHELFPT) constitute a COS domain. A Fibronectin type-III domain is found at 603-701 (TPGPIVIYQT…DICKVVTPDG (99 aa)).

The protein belongs to the TRIM/RBCC family.

The chain is Tripartite motif-containing protein 42 (TRIM42) from Homo sapiens (Human).